We begin with the raw amino-acid sequence, 142 residues long: Transcription antitermination protein NusB (142 aa).

Belongs to the NusB family.

Functionally, involved in transcription antitermination. Required for transcription of ribosomal RNA (rRNA) genes. Binds specifically to the boxA antiterminator sequence of the ribosomal RNA (rrn) operons. This chain is Transcription antitermination protein NusB, found in Persephonella marina (strain DSM 14350 / EX-H1).